Reading from the N-terminus, the 262-residue chain is uncharacterized protein (262 aa).

Positions 1 to 22 are cleaved as a signal peptide; the sequence is MGYLKRFALYISVMILIFAIAG. Cys23 carries the N-palmitoyl cysteine lipid modification. The S-diacylglycerol cysteine moiety is linked to residue Cys23.

It belongs to the staphylococcal tandem lipoprotein family.

It localises to the cell membrane. This is an uncharacterized protein from Staphylococcus aureus (strain NCTC 8325 / PS 47).